A 364-amino-acid polypeptide reads, in one-letter code: UDP-N-acetylglucosamine--N-acetylmuramyl-(pentapeptide) pyrophosphoryl-undecaprenol N-acetylglucosamine transferase (364 aa).

Residues 10-12 (TGG), Asn124, Arg165, Ser193, Ile248, and Gln293 each bind UDP-N-acetyl-alpha-D-glucosamine.

This sequence belongs to the glycosyltransferase 28 family. MurG subfamily.

It localises to the cell inner membrane. The enzyme catalyses di-trans,octa-cis-undecaprenyl diphospho-N-acetyl-alpha-D-muramoyl-L-alanyl-D-glutamyl-meso-2,6-diaminopimeloyl-D-alanyl-D-alanine + UDP-N-acetyl-alpha-D-glucosamine = di-trans,octa-cis-undecaprenyl diphospho-[N-acetyl-alpha-D-glucosaminyl-(1-&gt;4)]-N-acetyl-alpha-D-muramoyl-L-alanyl-D-glutamyl-meso-2,6-diaminopimeloyl-D-alanyl-D-alanine + UDP + H(+). It participates in cell wall biogenesis; peptidoglycan biosynthesis. Cell wall formation. Catalyzes the transfer of a GlcNAc subunit on undecaprenyl-pyrophosphoryl-MurNAc-pentapeptide (lipid intermediate I) to form undecaprenyl-pyrophosphoryl-MurNAc-(pentapeptide)GlcNAc (lipid intermediate II). This Geobacter metallireducens (strain ATCC 53774 / DSM 7210 / GS-15) protein is UDP-N-acetylglucosamine--N-acetylmuramyl-(pentapeptide) pyrophosphoryl-undecaprenol N-acetylglucosamine transferase.